The following is a 282-amino-acid chain: Complement component 1 Q subcomponent-binding protein, mitochondrial (282 aa).

A mitochondrion-targeting transit peptide spans 1-70 (MLPLLRCVPR…PRGPCACGCG (70 aa)). A C1q binding region spans residues 76–93 (TEGDKAFVDFLNDEIKEE). Lysine 91 carries the N6-acetyllysine modification. Residues 137–163 (NSIPPTFDGEEEPTQGQKVEEQEPELT) form a disordered region. Residues 168-213 (FVVEVIKNDDGKKALVLDCHYPEDEVGQEDEAESDIFSIREVSFQS) form an interaction with MAVS region. At tyrosine 188 the chain carries Phosphotyrosine. Phosphoserine occurs at positions 201 and 205.

The protein belongs to the MAM33 family. As to quaternary structure, homotrimer; three monomers form a donut-shaped structure with an unusually asymmetric charge distribution on the surface. Interacts with CDK13, HRK, VTN, NFYB, ADRA1B, FOXC1, DDX21, DDX50, NCL, SRSF1 and SRSF9. Interacts with CD93; the association may represent a cell surface C1q receptor. Interacts with KRT1; the association represents a cell surface kininogen receptor. Interacts with CD209; the interaction is indicative for a C1q:C1QBP:CD209 signaling complex. Interacts with FBL and RRP1; the respective interactions with C1QBP are competitive. Probably associates with the mitoribosome. Interacts with MAVS; the interaction occurs upon viral transfection. Interacts with PPIF. Interacts with U2AF1L4. Interacts with PLEKHN1. Interacts with VGF-derived peptide TLQP-21. Interacts with MRE11 and RAD50; forming the MRC (MRE11-RAD50-C1QBP) complex that inhibits the activity of MRE11. (Microbial infection) Interacts with Rubella virus capsid protein; the interaction occurs in mitochondria. In terms of assembly, (Microbial infection) Interacts with L.monocytogenes InlB.

The protein localises to the mitochondrion matrix. It is found in the nucleus. It localises to the cell membrane. The protein resides in the secreted. Its subcellular location is the cytoplasm. The protein localises to the nucleolus. In terms of biological role, multifunctional and multicompartmental protein involved in inflammation and infection processes, ribosome biogenesis, protein synthesis in mitochondria, regulation of apoptosis, transcriptional regulation and pre-mRNA splicing. At the cell surface is thought to act as an endothelial receptor for plasma proteins of the complement and kallikrein-kinin cascades. Putative receptor for C1q; specifically binds to the globular 'heads' of C1q thus inhibiting C1; may perform the receptor function through a complex with C1qR/CD93. In complex with cytokeratin-1/KRT1 is a high affinity receptor for kininogen-1/HMWK. Can also bind other plasma proteins, such as coagulation factor XII leading to its autoactivation. May function to bind initially fluid kininogen-1 to the cell membrane. The secreted form may enhance both extrinsic and intrinsic coagulation pathways. It is postulated that the cell surface form requires docking with transmembrane proteins for downstream signaling which might be specific for a cell-type or response. By acting as C1q receptor is involved in chemotaxis of immature dendritic cells and neutrophils and is proposed to signal through CD209/DC-SIGN on immature dendritic cells, through integrin alpha-4/beta-1 during trophoblast invasion of the decidua, and through integrin beta-1 during endothelial cell adhesion and spreading. Signaling involved in inhibition of innate immune response is implicating the PI3K-AKT/PKB pathway. Required for protein synthesis in mitochondria. In mitochondrial translation may be involved in formation of functional 55S mitoribosomes; the function seems to involve its RNA-binding activity. Acts as a RNA modification reader, which specifically recognizes and binds mitochondrial RNAs modified by C5-methylcytosine (m5C) in response to stress, and promotes recruitment of the mitochondrial degradosome complex, leading to their degradation. May be involved in the nucleolar ribosome maturation process; the function may involve the exchange of FBL for RRP1 in the association with pre-ribosome particles. Involved in regulation of RNA splicing by inhibiting the RNA-binding capacity of SRSF1 and its phosphorylation. Is required for the nuclear translocation of splicing factor U2AF1L4. Involved in regulation of CDKN2A- and HRK-mediated apoptosis. Stabilizes mitochondrial CDKN2A isoform smARF. May be involved in regulation of FOXC1 transcriptional activity and NFY/CCAAT-binding factor complex-mediated transcription. May play a role in antibacterial defense as it can bind to cell surface hyaluronan and inhibit Streptococcus pneumoniae hyaluronate lyase. May be involved in modulation of the immune response; ligation by HCV core protein is resulting in suppression of interleukin-12 production in monocyte-derived dendritic cells. Involved in regulation of antiviral response by inhibiting RIGI- and IFIH1-mediated signaling pathways probably involving its association with MAVS after viral infection. Acts as a regulator of DNA repair via homologous recombination by inhibiting the activity of MRE11: interacts with unphosphorylated MRE11 and RAD50 in absence of DNA damage, preventing formation and activity of the MRN complex. Following DNA damage, dissociates from phosphorylated MRE11, allowing formation of the MRN complex. Its function is as follows. (Microbial infection) During bacterial infection processes acts as an attachment site for microbial proteins, including Listeria monocytogenes internalin B (InlB). The polypeptide is Complement component 1 Q subcomponent-binding protein, mitochondrial (C1QBP) (Chlorocebus aethiops (Green monkey)).